Reading from the N-terminus, the 419-residue chain is eIF5-mimic protein 1 (419 aa).

The segment at M1 to K22 is disordered. K117 is subject to N6-acetyllysine. One can recognise a W2 domain in the interval V248–E415. Phosphoserine occurs at positions 412 and 414.

Belongs to the BZW family. Interacts with EIF3E, EIF2S2 and EIF3C.

It is found in the cytoplasm. Translation initiation regulator which represses non-AUG initiated translation and repeat-associated non-AUG (RAN) initiated translation by acting as a competitive inhibitor of eukaryotic translation initiation factor 5 (EIF5) function. Increases the accuracy of translation initiation by impeding EIF5-dependent translation from non-AUG codons by competing with it for interaction with EIF2S2 within the 43S pre-initiation complex (PIC) in an EIF3C-binding dependent manner. This is eIF5-mimic protein 1 (BZW2) from Macaca fascicularis (Crab-eating macaque).